The chain runs to 203 residues: Ras-related protein Rab-13 (203 aa).

Positions 17, 18, 20, 21, 22, 23, and 40 each coordinate GTP. Thr-22 is a Mg(2+) binding site. The Switch 1 signature appears at 31 to 45; the sequence is DNFNSTYISTIGIDF. Residue Thr-40 participates in Mg(2+) binding. Glycyl lysine isopeptide (Lys-Gly) (interchain with G-Cter in ubiquitin) cross-links involve residues Lys-46 and Lys-58. Asp-63 lines the Mg(2+) pocket. Residues 63-80 carry the Switch 2 motif; the sequence is DTAGQERFKTITTAYYRG. The GTP site is built by Gly-66, Asn-121, Lys-122, Asp-124, Ala-152, and Lys-153. The interval 173–203 is disordered; it reads TGGRRSGNSSKPSSTDLKVSDKKNSNKCSLG. The residue at position 178 (Ser-178) is a Phosphoserine. Polar residues predominate over residues 178-189; it reads SGNSSKPSSTDL. Position 200 is a cysteine methyl ester (Cys-200). Cys-200 carries the S-geranylgeranyl cysteine lipid modification. Residues 201-203 constitute a propeptide, removed in mature form; that stretch reads SLG.

The protein belongs to the small GTPase superfamily. Rab family. As to quaternary structure, interacts (GTP-bound form) with MICALL2; competes with RAB8A and is involved in tight junctions assembly. Interacts (GTP-bound form) with MICALL1. Interacts (GTP-bound form) with MICAL1, MICAL3, MICALCL, EHBP1 and EHBP1L1; ternary complexes of RAB8A, RAB13 and either MICAL1 or EHBP1L1 are possible. Interacts with PRKACA; downstream effector of RAB13 involved in tight junction assembly. Interacts with GRB2; may recruit RAB13 to the leading edge of migrating endothelial cells where it can activate RHOA. Interacts (isoprenylated form) with PDE6D; dissociates RAB13 from membranes. Interacts with BICDL2/BICDR2. Interacts with LEPROT and LEPROTL1. It depends on Mg(2+) as a cofactor. Post-translationally, ubiquitinated via 'Lys-11'-linked ubiquitination on Lys-46 and Lys-58; impairing the recruitment of guanosine diphosphate (GDP) dissociation inhibitor 1/GDI1. As to expression, highest levels found in lung, kidney, whole brain and spinal cord. Expressed in all tissues tested including Sertoli and germ cells (at protein level). Also detected in osteoclasts.

The protein localises to the cell membrane. Its subcellular location is the cytoplasmic vesicle membrane. The protein resides in the cell junction. It is found in the tight junction. It localises to the golgi apparatus. The protein localises to the trans-Golgi network membrane. Its subcellular location is the recycling endosome membrane. The protein resides in the cell projection. It is found in the lamellipodium. The catalysed reaction is GTP + H2O = GDP + phosphate + H(+). Its activity is regulated as follows. Regulated by guanine nucleotide exchange factors (GEFs) including DENND1C, which promote the exchange of bound GDP for free GTP. Regulated by GTPase activating proteins (GAPs) which increase the GTP hydrolysis activity. Inhibited by GDP dissociation inhibitors (GDIs). Activated in response to insulin. Functionally, the small GTPases Rab are key regulators of intracellular membrane trafficking, from the formation of transport vesicles to their fusion with membranes. Rabs cycle between an inactive GDP-bound form and an active GTP-bound form that is able to recruit to membranes different sets of downstream effectors directly responsible for vesicle formation, movement, tethering and fusion. RAB13 is involved in endocytic recycling and regulates the transport to the plasma membrane of transmembrane proteins like the tight junction protein OCLN/occludin. Thereby, it regulates the assembly and the activity of tight junctions. Moreover, it may also regulate tight junction assembly by activating the PKA signaling pathway and by reorganizing the actin cytoskeleton through the activation of the downstream effectors PRKACA and MICALL2 respectively. Through its role in tight junction assembly, may play a role in the establishment of Sertoli cell barrier. Plays also a role in angiogenesis through regulation of endothelial cells chemotaxis. Also involved in neurite outgrowth. Has also been proposed to play a role in post-Golgi membrane trafficking from the TGN to the recycling endosome. Finally, it has been involved in insulin-induced transport to the plasma membrane of the glucose transporter GLUT4 and therefore may play a role in glucose homeostasis. This is Ras-related protein Rab-13 from Rattus norvegicus (Rat).